Here is a 464-residue protein sequence, read N- to C-terminus: Chromosomal replication initiator protein DnaA (464 aa).

Residues 1–82 (MSLSLWQQCL…LLRFEVGSKP (82 aa)) form a domain I, interacts with DnaA modulators region. A domain II region spans residues 82-127 (PITQVISQTVTASVSSAPAAPAARTAAPSRPSWDNAAAQPELSYRS). The span at 98–113 (APAAPAARTAAPSRPS) shows a compositional bias: low complexity. Residues 98–117 (APAAPAARTAAPSRPSWDNA) form a disordered region. The segment at 128–344 (NVNPKHTFDN…GALNRVIANA (217 aa)) is domain III, AAA+ region. Residues Gly172, Gly174, Lys175, and Thr176 each coordinate ATP. A domain IV, binds dsDNA region spans residues 345 to 464 (NFTGRAITID…FSNLIRTLSS (120 aa)).

This sequence belongs to the DnaA family. As to quaternary structure, oligomerizes as a right-handed, spiral filament on DNA at oriC.

The protein localises to the cytoplasm. In terms of biological role, plays an important role in the initiation and regulation of chromosomal replication. Binds to the origin of replication; it binds specifically double-stranded DNA at a 9 bp consensus (dnaA box): 5'-TTATC[CA]A[CA]A-3'. DnaA binds to ATP and to acidic phospholipids. DnaA can inhibit its own gene expression as well as that of other genes. Plays an essential role in the initiation and regulation of chromosomal replication. ATP-DnaA binds to the origin of replication (oriC) to initiate formation of the DNA replication initiation complex once per cell cycle. Binds the DnaA box (a 9 base pair repeat at the origin) and separates the double-stranded (ds)DNA. Forms a right-handed helical filament on oriC DNA; dsDNA binds to the exterior of the filament while single-stranded (ss)DNA is stabiized in the filament's interior. The ATP-DnaA-oriC complex binds and stabilizes one strand of the AT-rich DNA unwinding element (DUE), permitting loading of DNA polymerase. After initiation quickly degrades to an ADP-DnaA complex that is not apt for DNA replication. Binds acidic phospholipids. This is Chromosomal replication initiator protein DnaA from Serratia marcescens.